The following is a 152-amino-acid chain: Transposase for insertion sequence element IS200 (152 aa).

Residues His61 and His63 each coordinate Mg(2+). Tyr125 serves as the catalytic Nucleophile. Mg(2+) is bound at residue Gln129.

The protein belongs to the transposase 17 family. As to quaternary structure, homodimer. Mg(2+) is required as a cofactor.

Functionally, transposase responsible for transposition of the IS200 insertion sequence (IS) element. Transposition occurs in 2 main steps, excision from the donor DNA 'top strand' into a single strand circle and its subsequent reinsertion into the DNA target. This increases the copy number of the IS. The polypeptide is Transposase for insertion sequence element IS200 (tnpA1) (Salmonella typhi).